A 209-amino-acid polypeptide reads, in one-letter code: FMN-dependent NADH:quinone oxidoreductase (209 aa).

Residues S9 and 15-17 (SNS) contribute to the FMN site.

The protein belongs to the azoreductase type 1 family. Homodimer. FMN serves as cofactor.

It carries out the reaction 2 a quinone + NADH + H(+) = 2 a 1,4-benzosemiquinone + NAD(+). The enzyme catalyses N,N-dimethyl-1,4-phenylenediamine + anthranilate + 2 NAD(+) = 2-(4-dimethylaminophenyl)diazenylbenzoate + 2 NADH + 2 H(+). Functionally, quinone reductase that provides resistance to thiol-specific stress caused by electrophilic quinones. Also exhibits azoreductase activity. Catalyzes the reductive cleavage of the azo bond in aromatic azo compounds to the corresponding amines. This chain is FMN-dependent NADH:quinone oxidoreductase, found in Bordetella parapertussis (strain 12822 / ATCC BAA-587 / NCTC 13253).